Reading from the N-terminus, the 283-residue chain is BTB/POZ domain-containing protein KCTD15 (283 aa).

The tract at residues 1–33 is disordered; the sequence is MPHRKERPSGSSLHAHGSTGTAEGGSMSRLSLT. A phosphoserine mark is found at S31, S35, and S38. In terms of domain architecture, BTB spans 56-126; sequence APVHIDVGGH…LRTSKLLLPD (71 aa).

In terms of assembly, forms oligomers, predominantly homopentamers. Interacts with KCTD1, probably forming heteropentamers depending on its abundance in a cell-type dependent manner. Interacts with TFAP2A; this interaction inhibits TFAP2A transcriptional activation.

It localises to the nucleus. In terms of biological role, during embryonic development, interferes with neural crest formation. Inhibits AP2 transcriptional activity by interaction with its activation domain. The sequence is that of BTB/POZ domain-containing protein KCTD15 (KCTD15) from Bos taurus (Bovine).